The sequence spans 397 residues: Elongation factor Tu 1 (397 aa).

A tr-type G domain is found at 10 to 207; the sequence is KPHVNVGTIG…TLDSYIPEPV (198 aa). Positions 19 to 26 are G1; sequence GHVDHGKT. 19–26 serves as a coordination point for GTP; that stretch reads GHVDHGKT. Thr26 serves as a coordination point for Mg(2+). The interval 60–64 is G2; the sequence is GITIN. Positions 81–84 are G3; the sequence is DCPG. GTP-binding positions include 81–85 and 136–139; these read DCPGH and NKAD. Residues 136–139 are G4; sequence NKAD. A G5 region spans residues 174–176; that stretch reads SAL.

The protein belongs to the TRAFAC class translation factor GTPase superfamily. Classic translation factor GTPase family. EF-Tu/EF-1A subfamily. As to quaternary structure, monomer.

The protein resides in the cytoplasm. It carries out the reaction GTP + H2O = GDP + phosphate + H(+). In terms of biological role, GTP hydrolase that promotes the GTP-dependent binding of aminoacyl-tRNA to the A-site of ribosomes during protein biosynthesis. This Stutzerimonas stutzeri (strain A1501) (Pseudomonas stutzeri) protein is Elongation factor Tu 1.